The chain runs to 250 residues: DNA repair protein RecO (250 aa).

The protein belongs to the RecO family.

In terms of biological role, involved in DNA repair and RecF pathway recombination. The chain is DNA repair protein RecO from Granulibacter bethesdensis (strain ATCC BAA-1260 / CGDNIH1).